Here is a 261-residue protein sequence, read N- to C-terminus: 5-oxoprolinase subunit A (261 aa).

This sequence belongs to the LamB/PxpA family. As to quaternary structure, forms a complex composed of PxpA, PxpB and PxpC.

The catalysed reaction is 5-oxo-L-proline + ATP + 2 H2O = L-glutamate + ADP + phosphate + H(+). In terms of biological role, catalyzes the cleavage of 5-oxoproline to form L-glutamate coupled to the hydrolysis of ATP to ADP and inorganic phosphate. The chain is 5-oxoprolinase subunit A from Symbiobacterium thermophilum (strain DSM 24528 / JCM 14929 / IAM 14863 / T).